Consider the following 401-residue polypeptide: (1R,4R,5S)-(-)-guaia-6,10(14)-diene synthase (401 aa).

Residues 1 to 21 (MVKFDSGSESEMTNGDDLHIN) are disordered. Residues aspartate 134 and glutamate 139 each coordinate Mg(2+). The short motif at 134 to 138 (DDQFD) is the DDXXD motif element. Arginine 242 provides a ligand contact to substrate. Mg(2+) is bound by residues asparagine 288 and serine 292. Position 295 (lysine 295) interacts with substrate. Aspartate 296 serves as a coordination point for Mg(2+). 375–376 (RY) is a substrate binding site.

The protein belongs to the terpene synthase family. It depends on Mg(2+) as a cofactor.

It carries out the reaction (2E,6E)-farnesyl diphosphate = (1R,4R,5S)-(-)-guaia-6,10(14)-diene + diphosphate. Its pathway is secondary metabolite biosynthesis; terpenoid biosynthesis. Functionally, catalyzes the conversion of (2E,6E)-farnesyl diphosphate (FPP) to yield the bicyclic sesquiterpene guaia-6,10(14)-diene via a 1,10-cyclization, which requires the abstraction of the pyrophosphate from FPP to yield the (E,E)-germacradienyl cation. The only accepted substrate is farnesyl diphosphate (FPP). The chain is (1R,4R,5S)-(-)-guaia-6,10(14)-diene synthase from Fusarium proliferatum (strain ET1) (Orchid endophyte fungus).